Consider the following 287-residue polypeptide: Inorganic pyrophosphatase (287 aa).

Residue T65 is modified to Phosphothreonine. Position 79 (R79) interacts with diphosphate. The Proton donor role is filled by Y90. Residues D116, D121, and D153 each coordinate Mg(2+). K239 is covalently cross-linked (Glycyl lysine isopeptide (Lys-Gly) (interchain with G-Cter in ubiquitin)). Position 251 is a phosphothreonine (T251). S266 carries the post-translational modification Phosphoserine. Residue K279 forms a Glycyl lysine isopeptide (Lys-Gly) (interchain with G-Cter in ubiquitin) linkage. S286 is modified (phosphoserine).

This sequence belongs to the PPase family. In terms of assembly, homodimer. Requires Mg(2+) as cofactor.

Its subcellular location is the cytoplasm. The catalysed reaction is diphosphate + H2O = 2 phosphate + H(+). The protein is Inorganic pyrophosphatase (IPP1) of Saccharomyces cerevisiae (strain ATCC 204508 / S288c) (Baker's yeast).